The sequence spans 482 residues: Ubiquitin carboxyl-terminal hydrolase MINDY-1 (482 aa).

The disordered stretch occupies residues 1–119 (MEQPQAECPA…RPQQLPQSPR (119 aa)). Over residues 21 to 66 (ESEKHEALSGPEKHPQDKDGADAAPEKHPQDKDGADAHGEAGKQKS) the composition is skewed to basic and acidic residues. Residues 82–94 (CPPPEASSSPPGP) show a composition bias toward pro residues. Polar residues predominate over residues 106–119 (EACSRPQQLPQSPR). Ser-117 is subject to Phosphoserine. Cys-151 (nucleophile) is an active-site residue. His-333 functions as the Proton acceptor in the catalytic mechanism. The segment at 402-441 (QVDQDYLIALSLQQQQQPQGMLGLSDLELAQQLQQEEYQQ) is ubiquitin-binding domain (UBD). Low complexity predominate over residues 437–446 (EEYQQQQAVQ). A disordered region spans residues 437-482 (EEYQQQQAVQPVRTRAPSSPGRGATSGRPAGERRQRSKTESDCVLL). Ser-454 carries the phosphoserine modification. Residues 466-482 (AGERRQRSKTESDCVLL) are compositionally biased toward basic and acidic residues.

This sequence belongs to the MINDY deubiquitinase family. FAM63 subfamily.

The enzyme catalyses Thiol-dependent hydrolysis of ester, thioester, amide, peptide and isopeptide bonds formed by the C-terminal Gly of ubiquitin (a 76-residue protein attached to proteins as an intracellular targeting signal).. Functionally, hydrolase that can specifically remove 'Lys-48'-linked conjugated ubiquitin from proteins. Has exodeubiquitinase activity and has a preference for long polyubiquitin chains. May play a regulatory role at the level of protein turnover. In Rattus norvegicus (Rat), this protein is Ubiquitin carboxyl-terminal hydrolase MINDY-1 (Mindy1).